The sequence spans 335 residues: MSHAGAIVGLGVALIAAALFSAIHKIEEGHVGVYYRGGALLSTTSGPGFHLMFPFITSFKSVQSTLQTDEIKNVPCGTSGGVMIYFDRIEVVNYLISSAVYDIVKNFTADYDKALIFNKIHHELNQFCSVHNLQEVYIELFDQIDENLKLALQEDLNLMAPGIIIQAVRVTKPKIPEAIGRNFELMEGEKTKLLIAAQKQKVVEKEAETERKKAIIEAEKVAQVAQIKYKQKVMEKETEKKISEIEDFAFVAREKARADAEYYTAHKVAEANRLKLTPEYLQLVKYQAIAANSKIYFGQDIPNMFMDSSAGPRVQSATVFQDDSLGLDEAASAEE.

Residues 1-2 (MS) lie on the Cytoplasmic side of the membrane. The chain crosses the membrane as a helical span at residues 3-23 (HAGAIVGLGVALIAAALFSAI). The Lumenal segment spans residues 24–335 (HKIEEGHVGV…GLDEAASAEE (312 aa)). The N-linked (GlcNAc...) asparagine glycan is linked to asparagine 106.

This sequence belongs to the band 7/mec-2 family.

Its subcellular location is the endoplasmic reticulum membrane. Its function is as follows. Mediates the endoplasmic reticulum-associated degradation (ERAD) of inositol 1,4,5-trisphosphate receptors (IP3Rs). Promotes sterol-accelerated ERAD of HMGCR. Involved in regulation of cellular cholesterol homeostasis by regulation the SREBP signaling pathway. The protein is Erlin-2-A (erlin2-a) of Xenopus laevis (African clawed frog).